A 473-amino-acid polypeptide reads, in one-letter code: Photosystem II CP43 reaction center protein (473 aa).

A propeptide spanning residues 1 to 14 (MKTLYSLRRFYHVE) is cleaved from the precursor. T15 carries the N-acetylthreonine modification. T15 is modified (phosphothreonine). A run of 5 helical transmembrane segments spans residues 69-93 (LFEV…PHLA), 134-155 (LLGP…KDRN), 178-200 (KALY…RKIT), 255-275 (KPFA…LSYS), and 291-312 (WFNN…ASQA). Residue E367 coordinates [CaMn4O5] cluster. A helical membrane pass occupies residues 447-471 (RARAAAAGFEKGIDRDFEPVLSMTP).

It belongs to the PsbB/PsbC family. PsbC subfamily. In terms of assembly, PSII is composed of 1 copy each of membrane proteins PsbA, PsbB, PsbC, PsbD, PsbE, PsbF, PsbH, PsbI, PsbJ, PsbK, PsbL, PsbM, PsbT, PsbX, PsbY, PsbZ, Psb30/Ycf12, at least 3 peripheral proteins of the oxygen-evolving complex and a large number of cofactors. It forms dimeric complexes. Binds multiple chlorophylls and provides some of the ligands for the Ca-4Mn-5O cluster of the oxygen-evolving complex. It may also provide a ligand for a Cl- that is required for oxygen evolution. PSII binds additional chlorophylls, carotenoids and specific lipids. is required as a cofactor.

The protein localises to the plastid. Its subcellular location is the chloroplast thylakoid membrane. One of the components of the core complex of photosystem II (PSII). It binds chlorophyll and helps catalyze the primary light-induced photochemical processes of PSII. PSII is a light-driven water:plastoquinone oxidoreductase, using light energy to abstract electrons from H(2)O, generating O(2) and a proton gradient subsequently used for ATP formation. The polypeptide is Photosystem II CP43 reaction center protein (Draba nemorosa (Woodland whitlowgrass)).